The following is a 302-amino-acid chain: Potassium/proton antiporter CemA (302 aa).

4 consecutive transmembrane segments (helical) span residues 55-75, 187-207, 225-247, and 262-282; these read VFVS…ITFL, FVSF…IIIL, FLLI…ELFL, and FIFL…KYWI.

This sequence belongs to the CemA family.

Its subcellular location is the plastid. The protein localises to the chloroplast inner membrane. The enzyme catalyses K(+)(in) + H(+)(out) = K(+)(out) + H(+)(in). Functionally, contributes to K(+)/H(+) antiport activity by supporting proton efflux to control proton extrusion and homeostasis in chloroplasts in a light-dependent manner to modulate photosynthesis. Prevents excessive induction of non-photochemical quenching (NPQ) under continuous-light conditions. Indirectly promotes efficient inorganic carbon uptake into chloroplasts. This is Potassium/proton antiporter CemA from Tupiella akineta (Green alga).